The chain runs to 175 residues: Diacylglycerol kinase (175 aa).

2 consecutive transmembrane segments (helical) span residues 55-75 (VAPN…YAFA) and 96-116 (LLHL…LVMI). Glu118 acts as the Proton acceptor in catalysis. Glu125 lines the a divalent metal cation pocket. A helical transmembrane segment spans residues 151–171 (VLLAAIAAVIVGGCLLLPPLL).

It belongs to the bacterial diacylglycerol kinase family. It depends on Mg(2+) as a cofactor.

Its subcellular location is the cell membrane. The enzyme catalyses a 1,2-diacyl-sn-glycerol + ATP = a 1,2-diacyl-sn-glycero-3-phosphate + ADP + H(+). In terms of biological role, catalyzes the ATP-dependent phosphorylation of sn-l,2-diacylglycerol (DAG) to phosphatidic acid. This chain is Diacylglycerol kinase (dgkA), found in Synechocystis sp. (strain ATCC 27184 / PCC 6803 / Kazusa).